The sequence spans 248 residues: DNA repair protein RecO (248 aa).

It belongs to the RecO family.

Its function is as follows. Involved in DNA repair and RecF pathway recombination. This chain is DNA repair protein RecO, found in Bradyrhizobium sp. (strain ORS 278).